The primary structure comprises 474 residues: 3-isopropylmalate dehydratase large subunit (474 aa).

[4Fe-4S] cluster contacts are provided by Cys353, Cys414, and Cys417.

Belongs to the aconitase/IPM isomerase family. LeuC type 1 subfamily. As to quaternary structure, heterodimer of LeuC and LeuD. [4Fe-4S] cluster is required as a cofactor.

It catalyses the reaction (2R,3S)-3-isopropylmalate = (2S)-2-isopropylmalate. It participates in amino-acid biosynthesis; L-leucine biosynthesis; L-leucine from 3-methyl-2-oxobutanoate: step 2/4. Functionally, catalyzes the isomerization between 2-isopropylmalate and 3-isopropylmalate, via the formation of 2-isopropylmaleate. This is 3-isopropylmalate dehydratase large subunit from Xylella fastidiosa (strain M12).